A 382-amino-acid polypeptide reads, in one-letter code: uncharacterized protein (382 aa).

12 helical membrane passes run 14–34 (GLLLLTLAIAVLNTLVPLWLA), 45–65 (VVSSSYFTGNLVGTLLTGYVI), 79–99 (FIFAAGCAGLGLMIGFWSWLA), 102–122 (FVAGVGCAMIWVVVESALMCS), 131–151 (LLAAYMMVYYVGTFLGQLLVS), 157–177 (LMSVLPWVTGLTLAGILPLLF), 204–224 (LGVNGCIISGIVLGSLYGLMP), 235–255 (ASIGFWMAVLVSAGILGQWPI), 270–290 (VQVFVVILGSIAMLSQAAMAP), 291–311 (ALFILGAAGFTLYPVAMAWAC), 325–345 (ALLLSYTVGSLLGPSFSAMLM), and 348–368 (FSDNLLFIMIASVSFIYLLML).

The protein belongs to the major facilitator superfamily. YcaD (TC 2.A.1.26) family.

The protein resides in the cell inner membrane. This is an uncharacterized protein from Shigella flexneri serotype 5b (strain 8401).